Reading from the N-terminus, the 540-residue chain is Light-independent protochlorophyllide reductase subunit B (540 aa).

Asp-36 is a binding site for [4Fe-4S] cluster. The active-site Proton donor is the Asp-292. 428–429 (GL) is a binding site for substrate. Residues 451–490 (SNVASGVEPSTPSVSSEVSASSSASPEASAPTPSPDGDMV) form a disordered region. Low complexity predominate over residues 457-481 (VEPSTPSVSSEVSASSSASPEASAP).

This sequence belongs to the ChlB/BchB/BchZ family. Protochlorophyllide reductase is composed of three subunits; BchL, BchN and BchB. Forms a heterotetramer of two BchB and two BchN subunits. [4Fe-4S] cluster is required as a cofactor.

It catalyses the reaction chlorophyllide a + oxidized 2[4Fe-4S]-[ferredoxin] + 2 ADP + 2 phosphate = protochlorophyllide a + reduced 2[4Fe-4S]-[ferredoxin] + 2 ATP + 2 H2O. It participates in porphyrin-containing compound metabolism; bacteriochlorophyll biosynthesis (light-independent). Its function is as follows. Component of the dark-operative protochlorophyllide reductase (DPOR) that uses Mg-ATP and reduced ferredoxin to reduce ring D of protochlorophyllide (Pchlide) to form chlorophyllide a (Chlide). This reaction is light-independent. The NB-protein (BchN-BchB) is the catalytic component of the complex. In Chlorobium chlorochromatii (strain CaD3), this protein is Light-independent protochlorophyllide reductase subunit B.